Reading from the N-terminus, the 227-residue chain is Isopentenyl-diphosphate Delta-isomerase 1 (227 aa).

Lysine 36 is a binding site for substrate. Mg(2+) is bound by residues histidine 40 and histidine 51. Positions 49-199 constitute a Nudix hydrolase domain; the sequence is LLHRAFSVFL…EIKITPWFQI (151 aa). Substrate is bound by residues arginine 70 and lysine 74. Residue cysteine 86 is the Proton acceptor of the active site. Substrate is bound at residue serine 87. Mg(2+) contacts are provided by glutamate 146 and glutamate 148. The active site involves glutamate 148. Position 176 is an N6-acetyllysine (lysine 176).

This sequence belongs to the IPP isomerase type 1 family. As to quaternary structure, monomer. The cofactor is Mg(2+).

The protein localises to the peroxisome. The enzyme catalyses isopentenyl diphosphate = dimethylallyl diphosphate. Its pathway is isoprenoid biosynthesis; dimethylallyl diphosphate biosynthesis; dimethylallyl diphosphate from isopentenyl diphosphate: step 1/1. Catalyzes the 1,3-allylic rearrangement of the homoallylic substrate isopentenyl (IPP) to its highly electrophilic allylic isomer, dimethylallyl diphosphate (DMAPP). In Bos taurus (Bovine), this protein is Isopentenyl-diphosphate Delta-isomerase 1 (IDI1).